Consider the following 102-residue polypeptide: Small ribosomal subunit protein uS10 (102 aa).

It belongs to the universal ribosomal protein uS10 family. In terms of assembly, part of the 30S ribosomal subunit.

In terms of biological role, involved in the binding of tRNA to the ribosomes. The chain is Small ribosomal subunit protein uS10 from Arthrobacter sp. (strain FB24).